The primary structure comprises 230 residues: Probable nicotinate-nucleotide adenylyltransferase (230 aa).

This sequence belongs to the NadD family.

The enzyme catalyses nicotinate beta-D-ribonucleotide + ATP + H(+) = deamido-NAD(+) + diphosphate. It functions in the pathway cofactor biosynthesis; NAD(+) biosynthesis; deamido-NAD(+) from nicotinate D-ribonucleotide: step 1/1. In terms of biological role, catalyzes the reversible adenylation of nicotinate mononucleotide (NaMN) to nicotinic acid adenine dinucleotide (NaAD). The polypeptide is Probable nicotinate-nucleotide adenylyltransferase (Pseudomonas putida (strain ATCC 47054 / DSM 6125 / CFBP 8728 / NCIMB 11950 / KT2440)).